The following is a 666-amino-acid chain: Calmodulin-binding receptor kinase CaMRLK (666 aa).

A signal peptide spans 1–17 (MFLKLFLLLSLVSFSHS). Over 18 to 297 (DSSSTVSCPN…KTHRTNHTPL (280 aa)) the chain is Extracellular. 15 N-linked (GlcNAc...) asparagine glycosylation sites follow: Asn-27, Asn-45, Asn-52, Asn-68, Asn-78, Asn-89, Asn-110, Asn-126, Asn-137, Asn-148, Asn-154, Asn-189, Asn-212, Asn-229, and Asn-261. LRR repeat units follow at residues 79–103 (LTRL…LWSM), 105–127 (GLVS…PVNG), 130–152 (LSAV…FTGF), 153–177 (TNLT…SLSG), 178–197 (LRHL…PISG), 198–224 (LKSL…NLNH), and 226–246 (QFLN…KYRK). The helical transmembrane segment at 298 to 318 (VIGLSSSLGALIIVIFAAAII) threads the bilayer. Residues 319–337 (LIRRRMKSARTKSRWAISN) form a calmodulin binding region. Residues 319–666 (LIRRRMKSAR…LLKDIRTVSR (348 aa)) are Cytoplasmic-facing. The region spanning 395-661 (FGTESVISDG…QQVLGLLKDI (267 aa)) is the Protein kinase domain. ATP-binding positions include 401 to 409 (ISDGTCGPL) and Lys-423.

The protein belongs to the protein kinase superfamily. Ser/Thr protein kinase family. As to quaternary structure, binds calmodulin (CaM) in a calcium-dependent manner. Interacts with CAM1, but not with CAM8. The cofactor is Mn(2+). Mg(2+) serves as cofactor. Post-translationally, calmodulin (CaM)-independent autophosphorylation. In terms of tissue distribution, expressed in reproductive and vegetative tissues, with higher levels in seedlings and flowers, but not in leaves.

It is found in the cell membrane. The catalysed reaction is L-seryl-[protein] + ATP = O-phospho-L-seryl-[protein] + ADP + H(+). The enzyme catalyses L-threonyl-[protein] + ATP = O-phospho-L-threonyl-[protein] + ADP + H(+). Not stimulated by calmodulin (CaM). Can phosphorylate the myelin basic protein in vitro. Required for endosperm development in embryos. Maybe involved in auxin and osmotic stress responses. The sequence is that of Calmodulin-binding receptor kinase CaMRLK from Arabidopsis thaliana (Mouse-ear cress).